The primary structure comprises 240 residues: Probable transcriptional regulatory protein Csal_0810 (240 aa).

The protein belongs to the TACO1 family.

Its subcellular location is the cytoplasm. This is Probable transcriptional regulatory protein Csal_0810 from Chromohalobacter salexigens (strain ATCC BAA-138 / DSM 3043 / CIP 106854 / NCIMB 13768 / 1H11).